Consider the following 101-residue polypeptide: Venom peptide Pc (101 aa).

An N-terminal signal peptide occupies residues 1-20 (MSHLRIAVIFLCTLFALTAG).

This sequence belongs to the scorpion La1-like peptide family. Contains 4 disulfide bonds. As to expression, expressed by the venom gland.

Its subcellular location is the secreted. The polypeptide is Venom peptide Pc (Pandinus cavimanus (Tanzanian red clawed scorpion)).